Consider the following 208-residue polypeptide: Outer-membrane lipoprotein carrier protein (208 aa).

An N-terminal signal peptide occupies residues 1-22; sequence MKNLLCAVMLTSPLLYSTAVFA.

It belongs to the LolA family. As to quaternary structure, monomer.

The protein localises to the periplasm. Participates in the translocation of lipoproteins from the inner membrane to the outer membrane. Only forms a complex with a lipoprotein if the residue after the N-terminal Cys is not an aspartate (The Asp acts as a targeting signal to indicate that the lipoprotein should stay in the inner membrane). This is Outer-membrane lipoprotein carrier protein from Shewanella sp. (strain W3-18-1).